We begin with the raw amino-acid sequence, 419 residues long: eIF5-mimic protein 2 (419 aa).

An N-acetylmethionine modification is found at M1. A compositionally biased stretch (polar residues) spans 1–15; it reads MNNQKQQKPTLSGQR. A disordered region spans residues 1-26; it reads MNNQKQQKPTLSGQRFKTRKRDEKER. Position 12 is a phosphoserine (S12). Residues 247-414 form the W2 domain; that stretch reads NQQTIGARKE…KNAEEESESE (168 aa). A Glycyl lysine isopeptide (Lys-Gly) (interchain with G-Cter in SUMO2) cross-link involves residue K368. 2 positions are modified to phosphoserine: S411 and S413.

The protein belongs to the BZW family.

Translation initiation regulator which represses repeat-associated non-AUG (RAN) initiated translation probably by acting as a competitive inhibitor of eukaryotic translation initiation factor 5 (EIF5) function. Enhances histone H4 gene transcription but does not seem to bind DNA directly. This Pongo abelii (Sumatran orangutan) protein is eIF5-mimic protein 2 (BZW1).